The following is a 257-amino-acid chain: Snake venom serine protease KN9 (257 aa).

An N-terminal signal peptide occupies residues 1 to 18 (MVLIRVLANLLILQLSYA). Positions 19–24 (QKSSEL) are excised as a propeptide. A Peptidase S1 domain is found at 25 to 248 (VVGGDECNIN…HLDWIKSIIA (224 aa)). 5 disulfides stabilise this stretch: Cys31-Cys162, Cys49-Cys65, Cys141-Cys209, Cys173-Cys188, and Cys199-Cys224. The active-site Charge relay system is the His64. Residue Asn102 is glycosylated (N-linked (GlcNAc...) asparagine). Asp109 acts as the Charge relay system in catalysis. Asn120 and Asn121 each carry an N-linked (GlcNAc...) asparagine glycan. The active-site Charge relay system is Ser203.

It belongs to the peptidase S1 family. Snake venom subfamily. In terms of assembly, monomer. Expressed by the venom gland.

It is found in the secreted. Snake venom serine protease that may act in the hemostasis system of the prey. This Trimeresurus stejnegeri (Chinese green tree viper) protein is Snake venom serine protease KN9.